We begin with the raw amino-acid sequence, 186 residues long: Protein GrpE (186 aa).

Over residues 1–17 the composition is skewed to basic and acidic residues; the sequence is MKDEHNQEHDLSQKELE. Residues 1 to 32 are disordered; that stretch reads MKDEHNQEHDLSQKELESCENSCTCEGKKQEA.

Belongs to the GrpE family. Homodimer.

The protein localises to the cytoplasm. In terms of biological role, participates actively in the response to hyperosmotic and heat shock by preventing the aggregation of stress-denatured proteins, in association with DnaK and GrpE. It is the nucleotide exchange factor for DnaK and may function as a thermosensor. Unfolded proteins bind initially to DnaJ; upon interaction with the DnaJ-bound protein, DnaK hydrolyzes its bound ATP, resulting in the formation of a stable complex. GrpE releases ADP from DnaK; ATP binding to DnaK triggers the release of the substrate protein, thus completing the reaction cycle. Several rounds of ATP-dependent interactions between DnaJ, DnaK and GrpE are required for fully efficient folding. The protein is Protein GrpE of Helicobacter acinonychis (strain Sheeba).